The sequence spans 305 residues: Tyrosine recombinase XerD (305 aa).

The region spanning 9–94 is the Core-binding (CB) domain; it reads MQDFGYVEQF…AIRRLFQYLH (86 aa). Positions 115–299 constitute a Tyr recombinase domain; the sequence is RLPKDISEEQ…ATERLKQIHS (185 aa). Residues Arg-155, Lys-179, His-251, Arg-254, and His-277 contribute to the active site. Tyr-286 serves as the catalytic O-(3'-phospho-DNA)-tyrosine intermediate.

Belongs to the 'phage' integrase family. XerD subfamily. In terms of assembly, forms a cyclic heterotetrameric complex composed of two molecules of XerC and two molecules of XerD.

It is found in the cytoplasm. In terms of biological role, site-specific tyrosine recombinase, which acts by catalyzing the cutting and rejoining of the recombining DNA molecules. The XerC-XerD complex is essential to convert dimers of the bacterial chromosome into monomers to permit their segregation at cell division. It also contributes to the segregational stability of plasmids. In Vibrio vulnificus (strain CMCP6), this protein is Tyrosine recombinase XerD.